Consider the following 434-residue polypeptide: Serine/threonine-protein kinase Sgk1-A (434 aa).

Residues 66–94 (PQEPELLNENSSPPPSPSQQINLGPSSNP) are disordered. The span at 84–94 (QQINLGPSSNP) shows a compositional bias: polar residues. In terms of domain architecture, Protein kinase spans 101-358 (FQFLKIIGKG…FMEIKNHIFF (258 aa)). ATP is bound by residues 107-115 (IGKGSFGKV) and lysine 130. Residue aspartate 225 is the Proton acceptor of the active site. In terms of domain architecture, AGC-kinase C-terminal spans 359-434 (SPINWDDLIN…SYAPPMESYL (76 aa)).

Belongs to the protein kinase superfamily. AGC Ser/Thr protein kinase family.

It is found in the cytoplasm. Its subcellular location is the nucleus. It localises to the endoplasmic reticulum. It catalyses the reaction L-seryl-[protein] + ATP = O-phospho-L-seryl-[protein] + ADP + H(+). It carries out the reaction L-threonyl-[protein] + ATP = O-phospho-L-threonyl-[protein] + ADP + H(+). In terms of biological role, protein kinase that may play an important role in cellular stress response. Plays an important role in activating certain potassium, sodium, and chloride channels, suggesting an involvement in the regulation of processes such as cell survival, neuronal excitability, and renal sodium excretion. This chain is Serine/threonine-protein kinase Sgk1-A (sgk1-a), found in Xenopus laevis (African clawed frog).